The sequence spans 407 residues: [Pyruvate dehydrogenase (acetyl-transferring)] kinase isozyme 2, mitochondrial (407 aa).

A Histidine kinase domain is found at 135–364 (LEYKDTYGDD…DAVIYLKALS (230 aa)). Residues tyrosine 215 and tyrosine 216 each carry the phosphotyrosine modification. ATP-binding positions include 251-258 (ELFKNAMR), aspartate 290, 309-310 (ST), and 325-330 (GFGYGL). Lysine 376 carries the post-translational modification N6-succinyllysine.

This sequence belongs to the PDK/BCKDK protein kinase family. In terms of assembly, homodimer, and heterodimer with PDK1. Interacts with the pyruvate dehydrogenase complex subunit DLAT, and is part of the multimeric pyruvate dehydrogenase complex that contains multiple copies of pyruvate dehydrogenase (E1), dihydrolipoamide acetyltransferase (DLAT, E2) and lipoamide dehydrogenase (DLD, E3). Detected in heart (at protein level).

The protein resides in the mitochondrion matrix. The catalysed reaction is L-seryl-[pyruvate dehydrogenase E1 alpha subunit] + ATP = O-phospho-L-seryl-[pyruvate dehydrogenase E1 alpha subunit] + ADP + H(+). Its function is as follows. Kinase that plays a key role in the regulation of glucose and fatty acid metabolism and homeostasis via phosphorylation of the pyruvate dehydrogenase subunits PDHA1 and PDHA2. This inhibits pyruvate dehydrogenase activity, and thereby regulates metabolite flux through the tricarboxylic acid cycle, down-regulates aerobic respiration and inhibits the formation of acetyl-coenzyme A from pyruvate. Inhibition of pyruvate dehydrogenase decreases glucose utilization and increases fat metabolism. Mediates cellular responses to insulin. Plays an important role in maintaining normal blood glucose levels and in metabolic adaptation to nutrient availability. Via its regulation of pyruvate dehydrogenase activity, plays an important role in maintaining normal blood pH and in preventing the accumulation of ketone bodies under starvation. Plays a role in the regulation of cell proliferation and in resistance to apoptosis under oxidative stress. Plays a role in p53/TP53-mediated apoptosis. The protein is [Pyruvate dehydrogenase (acetyl-transferring)] kinase isozyme 2, mitochondrial (Pdk2) of Mus musculus (Mouse).